Reading from the N-terminus, the 452-residue chain is Probable glycine dehydrogenase (decarboxylating) subunit 1 (452 aa).

This sequence belongs to the GcvP family. N-terminal subunit subfamily. In terms of assembly, the glycine cleavage system is composed of four proteins: P, T, L and H. In this organism, the P 'protein' is a heterodimer of two subunits.

The enzyme catalyses N(6)-[(R)-lipoyl]-L-lysyl-[glycine-cleavage complex H protein] + glycine + H(+) = N(6)-[(R)-S(8)-aminomethyldihydrolipoyl]-L-lysyl-[glycine-cleavage complex H protein] + CO2. Functionally, the glycine cleavage system catalyzes the degradation of glycine. The P protein binds the alpha-amino group of glycine through its pyridoxal phosphate cofactor; CO(2) is released and the remaining methylamine moiety is then transferred to the lipoamide cofactor of the H protein. The chain is Probable glycine dehydrogenase (decarboxylating) subunit 1 from Sphingopyxis alaskensis (strain DSM 13593 / LMG 18877 / RB2256) (Sphingomonas alaskensis).